Here is a 252-residue protein sequence, read N- to C-terminus: Proteasome subunit alpha type-7-1B (252 aa).

This sequence belongs to the peptidase T1A family. The 26S proteasome consists of a 20S proteasome core and two 19S regulatory subunits. The 20S proteasome core is composed of 28 subunits that are arranged in four stacked rings, resulting in a barrel-shaped structure. The two end rings are each formed by seven alpha subunits, and the two central rings are each formed by seven beta subunits. The catalytic chamber with the active sites is on the inside of the barrel. Testis specific.

It is found in the cytoplasm. The protein localises to the nucleus. In terms of biological role, the proteasome is a multicatalytic proteinase complex which is characterized by its ability to cleave peptides with Arg, Phe, Tyr, Leu, and Glu adjacent to the leaving group at neutral or slightly basic pH. The proteasome has an ATP-dependent proteolytic activity. In Drosophila melanogaster (Fruit fly), this protein is Proteasome subunit alpha type-7-1B (Prosalpha4T2).